The sequence spans 284 residues: D-tagatose-1,6-bisphosphate aldolase subunit GatY (284 aa).

Catalysis depends on D82, which acts as the Proton donor. Zn(2+) contacts are provided by H83 and H180. G181 is a dihydroxyacetone phosphate binding site. Residue H208 coordinates Zn(2+). Dihydroxyacetone phosphate is bound by residues 209–211 (GAS) and 230–233 (NVAT).

This sequence belongs to the class II fructose-bisphosphate aldolase family. TagBP aldolase GatY subfamily. In terms of assembly, forms a complex with GatZ. Zn(2+) serves as cofactor.

The catalysed reaction is D-tagatofuranose 1,6-bisphosphate = D-glyceraldehyde 3-phosphate + dihydroxyacetone phosphate. It participates in carbohydrate metabolism; D-tagatose 6-phosphate degradation; D-glyceraldehyde 3-phosphate and glycerone phosphate from D-tagatose 6-phosphate: step 2/2. Catalytic subunit of the tagatose-1,6-bisphosphate aldolase GatYZ, which catalyzes the reversible aldol condensation of dihydroxyacetone phosphate (DHAP or glycerone-phosphate) with glyceraldehyde 3-phosphate (G3P) to produce tagatose 1,6-bisphosphate (TBP). Requires GatZ subunit for full activity and stability. Is involved in the catabolism of galactitol. The protein is D-tagatose-1,6-bisphosphate aldolase subunit GatY of Salmonella enteritidis PT4 (strain P125109).